Reading from the N-terminus, the 499-residue chain is uncharacterized protein (499 aa).

Disordered regions lie at residues 76–118 (QATA…RLSP) and 208–268 (DFET…DWAN). The span at 87–104 (DPEKQTGKSRYHPSEEIR) shows a compositional bias: basic and acidic residues. Positions 208–263 (DFETEDDESGDDDSEDTGEDEDEEEWVAILEDEDEDDDDDDDDDEDDDDSDSDESL) are enriched in acidic residues. S355 carries the post-translational modification Phosphoserine. Residues 478–499 (AEGQIRKLLFPKTNQSTQPKPK) are disordered. Residues 489 to 499 (KTNQSTQPKPK) show a composition bias toward polar residues.

This is an uncharacterized protein from Arabidopsis thaliana (Mouse-ear cress).